The primary structure comprises 475 residues: Ribulose bisphosphate carboxylase large chain (475 aa).

Positions 1–2 are excised as a propeptide; that stretch reads MS. Proline 3 is modified (N-acetylproline). N6,N6,N6-trimethyllysine is present on lysine 14. Substrate-binding residues include asparagine 123 and threonine 173. The active-site Proton acceptor is the lysine 175. Substrate is bound at residue lysine 177. Mg(2+) is bound by residues lysine 201, aspartate 203, and glutamate 204. N6-carboxylysine is present on lysine 201. Catalysis depends on histidine 294, which acts as the Proton acceptor. Substrate is bound by residues arginine 295, histidine 327, and serine 379.

Belongs to the RuBisCO large chain family. Type I subfamily. In terms of assembly, heterohexadecamer of 8 large chains and 8 small chains; disulfide-linked. The disulfide link is formed within the large subunit homodimers. It depends on Mg(2+) as a cofactor. In terms of processing, the disulfide bond which can form in the large chain dimeric partners within the hexadecamer appears to be associated with oxidative stress and protein turnover.

The protein localises to the plastid. It localises to the chloroplast. It catalyses the reaction 2 (2R)-3-phosphoglycerate + 2 H(+) = D-ribulose 1,5-bisphosphate + CO2 + H2O. The catalysed reaction is D-ribulose 1,5-bisphosphate + O2 = 2-phosphoglycolate + (2R)-3-phosphoglycerate + 2 H(+). RuBisCO catalyzes two reactions: the carboxylation of D-ribulose 1,5-bisphosphate, the primary event in carbon dioxide fixation, as well as the oxidative fragmentation of the pentose substrate in the photorespiration process. Both reactions occur simultaneously and in competition at the same active site. This chain is Ribulose bisphosphate carboxylase large chain, found in Adiantum capillus-veneris (Maidenhair fern).